The chain runs to 297 residues: ClpXP adapter protein SpxH (297 aa).

Belongs to the SpxH family. As to quaternary structure, interacts with Spx.

The protein resides in the cytoplasm. In terms of biological role, adapter protein required for efficient degradation of Spx by ClpXP under non-stress conditions. Interaction with Spx stabilizes Spx and exposes the C-terminus of Spx for recognition and proteolysis by ClpXP. The sequence is that of ClpXP adapter protein SpxH from Bacillus cereus (strain ZK / E33L).